A 273-amino-acid polypeptide reads, in one-letter code: 2-dehydro-3-deoxyphosphooctonate aldolase (273 aa).

This sequence belongs to the KdsA family.

It localises to the cytoplasm. The enzyme catalyses D-arabinose 5-phosphate + phosphoenolpyruvate + H2O = 3-deoxy-alpha-D-manno-2-octulosonate-8-phosphate + phosphate. It functions in the pathway carbohydrate biosynthesis; 3-deoxy-D-manno-octulosonate biosynthesis; 3-deoxy-D-manno-octulosonate from D-ribulose 5-phosphate: step 2/3. It participates in bacterial outer membrane biogenesis; lipopolysaccharide biosynthesis. The polypeptide is 2-dehydro-3-deoxyphosphooctonate aldolase (Citrifermentans bemidjiense (strain ATCC BAA-1014 / DSM 16622 / JCM 12645 / Bem) (Geobacter bemidjiensis)).